Consider the following 274-residue polypeptide: uncharacterized protein (274 aa).

This is an uncharacterized protein from Acidianus hospitalis (AFV-1).